Reading from the N-terminus, the 331-residue chain is MTIIVTGAAGFIGANIVKGLNERGETDIIAVDNLTRADKFKNIVDCQISDYLDKTDFVERFARGEFGKVRAIFHEGACSDTMETDGRYMMDNNYRYSLAVMRACLDQGVQFLYASSAATYGASETFREEPEFERPLNVYGYSKLLFDQVVRRVMLTALSQIVGFRYFNVYGPREQHKGRMASVAFHNFNQFRSEGTVKLFGEYNGYPQGGQMRDFVSVEDVVKVNLFFFDNPDKSGIFNLGTGRAQPFNDIATTVMNTLRGAEGKPALSTEELAQEGLIEYVKFPDALRGKYQCFTQADQSRLRAAGYTAPFLTVQEGVERYCQWLLKQPV.

NADP(+)-binding positions include F11–I12, D32–N33, K39, K54, E75–S79, and N92. The active-site Proton acceptor is the Y139. Residue K143 participates in NADP(+) binding. Position 168 (N168) interacts with substrate. Residues V169 and K177 each coordinate NADP(+). The active-site Proton acceptor is K177. Substrate contacts are provided by residues R179, H186, F200–Y203, R213, and Y292.

Belongs to the NAD(P)-dependent epimerase/dehydratase family. HldD subfamily. In terms of assembly, homopentamer. The cofactor is NADP(+).

The enzyme catalyses ADP-D-glycero-beta-D-manno-heptose = ADP-L-glycero-beta-D-manno-heptose. It participates in nucleotide-sugar biosynthesis; ADP-L-glycero-beta-D-manno-heptose biosynthesis; ADP-L-glycero-beta-D-manno-heptose from D-glycero-beta-D-manno-heptose 7-phosphate: step 4/4. Functionally, catalyzes the interconversion between ADP-D-glycero-beta-D-manno-heptose and ADP-L-glycero-beta-D-manno-heptose via an epimerization at carbon 6 of the heptose. This is ADP-L-glycero-D-manno-heptose-6-epimerase from Ralstonia pickettii (strain 12J).